The following is a 510-amino-acid chain: NAD(P)H-quinone oxidoreductase subunit 2, chloroplastic (510 aa).

The next 12 helical transmembrane spans lie at 24 to 44, 59 to 79, 99 to 119, 124 to 144, 149 to 169, 183 to 203, 229 to 249, 295 to 315, 323 to 343, 354 to 374, 395 to 415, and 418 to 438; these read LLLF…GLIL, WFYF…LFRW, IFQF…VEYI, MAIT…MFLC, LITI…LSGY, YLLM…WLYG, ISIA…PAPF, WHLL…LIAI, MLAY…IVGD, YMLF…LFGL, ALSS…AGFF, and LYLF…IGLL.

It belongs to the complex I subunit 2 family. In terms of assembly, NDH is composed of at least 16 different subunits, 5 of which are encoded in the nucleus.

The protein resides in the plastid. Its subcellular location is the chloroplast thylakoid membrane. It catalyses the reaction a plastoquinone + NADH + (n+1) H(+)(in) = a plastoquinol + NAD(+) + n H(+)(out). The enzyme catalyses a plastoquinone + NADPH + (n+1) H(+)(in) = a plastoquinol + NADP(+) + n H(+)(out). Functionally, NDH shuttles electrons from NAD(P)H:plastoquinone, via FMN and iron-sulfur (Fe-S) centers, to quinones in the photosynthetic chain and possibly in a chloroplast respiratory chain. The immediate electron acceptor for the enzyme in this species is believed to be plastoquinone. Couples the redox reaction to proton translocation, and thus conserves the redox energy in a proton gradient. The polypeptide is NAD(P)H-quinone oxidoreductase subunit 2, chloroplastic (Ananas comosus (Pineapple)).